The chain runs to 120 residues: Ribosome-binding factor A (120 aa).

It belongs to the RbfA family. In terms of assembly, monomer. Binds 30S ribosomal subunits, but not 50S ribosomal subunits or 70S ribosomes.

Its subcellular location is the cytoplasm. Functionally, one of several proteins that assist in the late maturation steps of the functional core of the 30S ribosomal subunit. Associates with free 30S ribosomal subunits (but not with 30S subunits that are part of 70S ribosomes or polysomes). Required for efficient processing of 16S rRNA. May interact with the 5'-terminal helix region of 16S rRNA. This chain is Ribosome-binding factor A, found in Clostridium botulinum (strain 657 / Type Ba4).